Reading from the N-terminus, the 454-residue chain is UDP-N-acetylmuramoylalanine--D-glutamate ligase (454 aa).

Position 117 to 123 (117 to 123 (GTNGKTT)) interacts with ATP.

This sequence belongs to the MurCDEF family.

It localises to the cytoplasm. It carries out the reaction UDP-N-acetyl-alpha-D-muramoyl-L-alanine + D-glutamate + ATP = UDP-N-acetyl-alpha-D-muramoyl-L-alanyl-D-glutamate + ADP + phosphate + H(+). It participates in cell wall biogenesis; peptidoglycan biosynthesis. Functionally, cell wall formation. Catalyzes the addition of glutamate to the nucleotide precursor UDP-N-acetylmuramoyl-L-alanine (UMA). The sequence is that of UDP-N-acetylmuramoylalanine--D-glutamate ligase from Alkaliphilus oremlandii (strain OhILAs) (Clostridium oremlandii (strain OhILAs)).